The chain runs to 538 residues: Thermosome subunit beta (538 aa).

The segment at 518-538 (SSGSSEEGMEEMGGMGGMPPM) is disordered. The segment covering 528–538 (EMGGMGGMPPM) has biased composition (gly residues).

Belongs to the TCP-1 chaperonin family. In terms of assembly, forms a Heterooligomeric complex of two stacked eight-membered rings.

Molecular chaperone; binds unfolded polypeptides in vitro, and has a weak ATPase activity. The protein is Thermosome subunit beta (thsB) of Methanothermobacter thermautotrophicus (strain ATCC 29096 / DSM 1053 / JCM 10044 / NBRC 100330 / Delta H) (Methanobacterium thermoautotrophicum).